A 356-amino-acid chain; its full sequence is D-amino-acid oxidase (356 aa).

The N-terminal stretch at 1-17 is a signal peptide; it reads MAKIVVIGAGVAGLTTA. 4 residues coordinate FAD: Ala9, Ser44, Gly48, and Asn50. Phe54 lines the anthranilate pocket. Val171 is a binding site for FAD. A glycan (N-linked (GlcNAc...) asparagine) is linked at Asn192. An anthranilate-binding site is contributed by Tyr243. Tyr243 contacts (R)-lactate. Asn262 carries N-linked (GlcNAc...) asparagine glycosylation. Residues Arg302, Ala329, Gly332, Tyr333, and Gln334 each contribute to the FAD site. Arg302 serves as a coordination point for anthranilate. Position 302 (Arg302) interacts with (R)-lactate.

Belongs to the DAMOX/DASOX family. FAD serves as cofactor.

It is found in the peroxisome matrix. The catalysed reaction is a D-alpha-amino acid + O2 + H2O = a 2-oxocarboxylate + H2O2 + NH4(+). It carries out the reaction D-alanine + O2 + H2O = pyruvate + H2O2 + NH4(+). The enzyme catalyses D-serine + O2 + H2O = 3-hydroxypyruvate + H2O2 + NH4(+). It catalyses the reaction D-phenylalanine + O2 + H2O = 3-phenylpyruvate + H2O2 + NH4(+). The catalysed reaction is D-lysine + O2 + H2O = 6-amino-2-oxohexanoate + H2O2 + NH4(+). It carries out the reaction D-tyrosine + O2 + H2O = 3-(4-hydroxyphenyl)pyruvate + H2O2 + NH4(+). The enzyme catalyses D-methionine + O2 + H2O = 4-methylsulfanyl-2-oxobutanoate + H2O2 + NH4(+). It catalyses the reaction D-tryptophan + O2 + H2O = indole-3-pyruvate + H2O2 + NH4(+). The catalysed reaction is D-leucine + O2 + H2O = 4-methyl-2-oxopentanoate + H2O2 + NH4(+). It carries out the reaction D-valine + O2 + H2O = 3-methyl-2-oxobutanoate + H2O2 + NH4(+). Inhibited by benzoate and hypochlorite. In terms of biological role, catalyzes the oxidative deamination of D-amino acids with broad substrate specificity. Enables the organism to utilize D-amino acids as a source of nutrients. The protein is D-amino-acid oxidase of Trigonopsis variabilis (Yeast).